The chain runs to 549 residues: Eukaryotic translation initiation factor 3 subunit D-2 (549 aa).

The interval 107–157 (ARVKGRSGRGPGMLGVAGSMAGGGTTSGSTKYGKGRESRRNQGRRFARNAP) is disordered. The segment covering 114 to 132 (GRGPGMLGVAGSMAGGGTT) has biased composition (gly residues). Residues 288–302 (QFDLLTVNETSLEPP) are RNA gate. Residues 527 to 549 (NSFDSDAEDEENSSEPFANSLDN) are disordered. Positions 529 to 539 (FDSDAEDEENS) are enriched in acidic residues.

Belongs to the eIF-3 subunit D family. Component of the eukaryotic translation initiation factor 3 (eIF-3) complex. The eIF-3 complex interacts with pix.

It is found in the cytoplasm. MRNA cap-binding component of the eukaryotic translation initiation factor 3 (eIF-3) complex, which is involved in protein synthesis of a specialized repertoire of mRNAs and, together with other initiation factors, stimulates binding of mRNA and methionyl-tRNAi to the 40S ribosome. The eIF-3 complex specifically targets and initiates translation of a subset of mRNAs involved in cell proliferation. In the eIF-3 complex, eif3d specifically recognizes and binds the 7-methylguanosine cap of a subset of mRNAs. The chain is Eukaryotic translation initiation factor 3 subunit D-2 from Drosophila ananassae (Fruit fly).